A 160-amino-acid chain; its full sequence is 2-C-methyl-D-erythritol 2,4-cyclodiphosphate synthase (160 aa).

Residues Asp-11 and His-13 each contribute to the a divalent metal cation site. 4-CDP-2-C-methyl-D-erythritol 2-phosphate is bound by residues 11 to 13 (DVH) and 37 to 38 (HS). His-45 lines the a divalent metal cation pocket. Residues 59–61 (DIG), 64–68 (FPDTD), 103–109 (AQAPKMA), 135–138 (TTTE), Phe-142, and Arg-145 each bind 4-CDP-2-C-methyl-D-erythritol 2-phosphate.

This sequence belongs to the IspF family. In terms of assembly, homotrimer. The cofactor is a divalent metal cation.

It catalyses the reaction 4-CDP-2-C-methyl-D-erythritol 2-phosphate = 2-C-methyl-D-erythritol 2,4-cyclic diphosphate + CMP. It participates in isoprenoid biosynthesis; isopentenyl diphosphate biosynthesis via DXP pathway; isopentenyl diphosphate from 1-deoxy-D-xylulose 5-phosphate: step 4/6. In terms of biological role, involved in the biosynthesis of isopentenyl diphosphate (IPP) and dimethylallyl diphosphate (DMAPP), two major building blocks of isoprenoid compounds. Catalyzes the conversion of 4-diphosphocytidyl-2-C-methyl-D-erythritol 2-phosphate (CDP-ME2P) to 2-C-methyl-D-erythritol 2,4-cyclodiphosphate (ME-CPP) with a corresponding release of cytidine 5-monophosphate (CMP). The polypeptide is 2-C-methyl-D-erythritol 2,4-cyclodiphosphate synthase (Thioalkalivibrio sulfidiphilus (strain HL-EbGR7)).